We begin with the raw amino-acid sequence, 345 residues long: Tryptophan--tRNA ligase (345 aa).

Residues 12 to 14 (RPT) and 20 to 21 (GH) each bind ATP. Positions 13–21 (PTGKLHLGH) match the 'HIGH' region motif. An L-tryptophan-binding site is contributed by aspartate 144. ATP contacts are provided by residues 156 to 158 (GKD), leucine 194, and 202 to 206 (KMSKS). A 'KMSKS' region motif is present at residues 202-206 (KMSKS).

The protein belongs to the class-I aminoacyl-tRNA synthetase family. In terms of assembly, homodimer.

It is found in the cytoplasm. The catalysed reaction is tRNA(Trp) + L-tryptophan + ATP = L-tryptophyl-tRNA(Trp) + AMP + diphosphate + H(+). In terms of biological role, catalyzes the attachment of tryptophan to tRNA(Trp). This Chlamydia caviae (strain ATCC VR-813 / DSM 19441 / 03DC25 / GPIC) (Chlamydophila caviae) protein is Tryptophan--tRNA ligase.